A 524-amino-acid chain; its full sequence is GMP synthase [glutamine-hydrolyzing] (524 aa).

The 199-residue stretch at 9–207 (RILILDFGSQ…VIHICQCIPN (199 aa)) folds into the Glutamine amidotransferase type-1 domain. Catalysis depends on Cys-86, which acts as the Nucleophile. Catalysis depends on residues His-181 and Glu-183. The 192-residue stretch at 208 to 399 (WTTKHIIEDS…LGLPADLIYR (192 aa)) folds into the GMPS ATP-PPase domain. 235 to 241 (SGGVDSA) serves as a coordination point for ATP.

Homodimer.

The catalysed reaction is XMP + L-glutamine + ATP + H2O = GMP + L-glutamate + AMP + diphosphate + 2 H(+). It functions in the pathway purine metabolism; GMP biosynthesis; GMP from XMP (L-Gln route): step 1/1. Catalyzes the synthesis of GMP from XMP. The chain is GMP synthase [glutamine-hydrolyzing] from Coxiella burnetii (strain CbuG_Q212) (Coxiella burnetii (strain Q212)).